Reading from the N-terminus, the 407-residue chain is Imidazolonepropionase (407 aa).

Fe(3+) is bound by residues His68 and His70. The Zn(2+) site is built by His68 and His70. Residues Arg77, Tyr140, and His173 each contribute to the 4-imidazolone-5-propanoate site. An N-formimidoyl-L-glutamate-binding site is contributed by Tyr140. His236 lines the Fe(3+) pocket. His236 serves as a coordination point for Zn(2+). Gln239 is a binding site for 4-imidazolone-5-propanoate. Asp311 is a Fe(3+) binding site. Residue Asp311 coordinates Zn(2+). Residues Asn313 and Gly315 each contribute to the N-formimidoyl-L-glutamate site. A 4-imidazolone-5-propanoate-binding site is contributed by Thr316.

This sequence belongs to the metallo-dependent hydrolases superfamily. HutI family. It depends on Zn(2+) as a cofactor. Fe(3+) serves as cofactor.

The protein resides in the cytoplasm. It catalyses the reaction 4-imidazolone-5-propanoate + H2O = N-formimidoyl-L-glutamate. Its pathway is amino-acid degradation; L-histidine degradation into L-glutamate; N-formimidoyl-L-glutamate from L-histidine: step 3/3. Its function is as follows. Catalyzes the hydrolytic cleavage of the carbon-nitrogen bond in imidazolone-5-propanoate to yield N-formimidoyl-L-glutamate. It is the third step in the universal histidine degradation pathway. This Stenotrophomonas maltophilia (strain R551-3) protein is Imidazolonepropionase.